We begin with the raw amino-acid sequence, 467 residues long: MSTKIVETITLECETGNYHSFCPISCVSWLYQKIEDSFFLVVGTKTCGYFLQNALGVMIFAEPRYAMAELEEGDISAHLNDYEELKTLCIRIRKDRDPSVIIWIGTCTTEIIKMDLEGMAPKLEYEIGVPILVARANGLDYAFTQGEDTVLAVMAHRCPDQELPIGESKETKTKLFPFPLLKEKNLVEYANHPPLVIFGSLPSNLVSQLDTELRRQFIKVSGWLPAQRYADLPSLGDGVYVCGVNPFLSRTATTLIRRKKCELIVAPFPIGPDGTRAWIERICPVFGIEAQSLEEREERIWESLKDYLDLVRGKSVFFMGDNLIEISIARFLIRCGMIVYEIGIPYMDKRYQAAELALLQNTCIRMCMPIPRIVEKPDNSNQIRRMRELQPDLAITGMAHANPLGARGIGTKWSVEFTFAQIHGFANARDVLELVTRPLRRNENLDNLDRTTLVRKNNELYTSTPVK.

Positions 22, 47, and 107 each coordinate [4Fe-4S] cluster.

This sequence belongs to the BchN/ChlN family. As to quaternary structure, protochlorophyllide reductase is composed of three subunits; ChlL, ChlN and ChlB. Forms a heterotetramer of two ChlB and two ChlN subunits. [4Fe-4S] cluster is required as a cofactor.

It localises to the plastid. It is found in the chloroplast. The catalysed reaction is chlorophyllide a + oxidized 2[4Fe-4S]-[ferredoxin] + 2 ADP + 2 phosphate = protochlorophyllide a + reduced 2[4Fe-4S]-[ferredoxin] + 2 ATP + 2 H2O. It participates in porphyrin-containing compound metabolism; chlorophyll biosynthesis (light-independent). Component of the dark-operative protochlorophyllide reductase (DPOR) that uses Mg-ATP and reduced ferredoxin to reduce ring D of protochlorophyllide (Pchlide) to form chlorophyllide a (Chlide). This reaction is light-independent. The NB-protein (ChlN-ChlB) is the catalytic component of the complex. This chain is Light-independent protochlorophyllide reductase subunit N, found in Pinus thunbergii (Japanese black pine).